The chain runs to 428 residues: Enolase (428 aa).

Residue Q163 participates in (2R)-2-phosphoglycerate binding. E205 functions as the Proton donor in the catalytic mechanism. Mg(2+) contacts are provided by D242, E286, and D313. The (2R)-2-phosphoglycerate site is built by K338, R367, S368, and K389. The Proton acceptor role is filled by K338.

It belongs to the enolase family. Mg(2+) serves as cofactor.

Its subcellular location is the cytoplasm. It is found in the secreted. The protein resides in the cell surface. The catalysed reaction is (2R)-2-phosphoglycerate = phosphoenolpyruvate + H2O. Its pathway is carbohydrate degradation; glycolysis; pyruvate from D-glyceraldehyde 3-phosphate: step 4/5. Functionally, catalyzes the reversible conversion of 2-phosphoglycerate (2-PG) into phosphoenolpyruvate (PEP). It is essential for the degradation of carbohydrates via glycolysis. The chain is Enolase from Verminephrobacter eiseniae (strain EF01-2).